A 351-amino-acid polypeptide reads, in one-letter code: MLFKKIRGLFSNDLSIDLGTANTLIYVKGQGIVLDEPSVVAIRQERSGALKSIAAVGRDAKLMLGRTPKSIAAIRPMKDGVIADFFVTEKMLQYFIKQVHSSNFMRPSPRVLVCVPAGATQVERRAIKESAIGAGAREVYLIEEPMAAAIGAKLPVSTATGSMVIDIGGGTTEVAVISLNGIVYSSSVRIGGDRFDEAIISYVRKTFGSIIGEPTAERIKQEIGSAFIQEGDEVREIEVHGHNLAEGAPRSFKLTSRDVLEAIQAPLNGIVAAVRTALEECQPEHAADIFERGMVLTGGGALIRNIDVLLSKETGVPVIIADDPLTCVARGGGEALEMIDMHGGDIFSDDI.

Residues 20–22 (TAN), 169–171 (GGT), 217–220 (ERIK), and 299–302 (GGAL) contribute to the ATP site.

This sequence belongs to the FtsA/MreB family. In terms of assembly, forms polymers.

It localises to the cytoplasm. Forms membrane-associated dynamic filaments that are essential for cell shape determination. Acts by regulating cell wall synthesis and cell elongation, and thus cell shape. A feedback loop between cell geometry and MreB localization may maintain elongated cell shape by targeting cell wall growth to regions of negative cell wall curvature. This chain is Cell shape-determining protein MreB, found in Pasteurella multocida (strain Pm70).